The sequence spans 441 residues: Glutamate--tRNA ligase 2 (441 aa).

The 'HIGH' region signature appears at 9–19 (PSPTGYIHVGN). The 'KMSKS' region motif lies at 239 to 243 (ALSKR). Lysine 242 contributes to the ATP binding site.

It belongs to the class-I aminoacyl-tRNA synthetase family. Glutamate--tRNA ligase type 1 subfamily. In terms of assembly, monomer.

The protein resides in the cytoplasm. The catalysed reaction is tRNA(Glu) + L-glutamate + ATP = L-glutamyl-tRNA(Glu) + AMP + diphosphate. Catalyzes the attachment of glutamate to tRNA(Glu) in a two-step reaction: glutamate is first activated by ATP to form Glu-AMP and then transferred to the acceptor end of tRNA(Glu). This is Glutamate--tRNA ligase 2 from Cereibacter sphaeroides (strain ATCC 17029 / ATH 2.4.9) (Rhodobacter sphaeroides).